A 348-amino-acid chain; its full sequence is Protein pelota homolog (348 aa).

It belongs to the eukaryotic release factor 1 family. Pelota subfamily. As to quaternary structure, monomer. The cofactor is a divalent metal cation.

It is found in the cytoplasm. May function in recognizing stalled ribosomes, interact with stem-loop structures in stalled mRNA molecules, and effect endonucleolytic cleavage of the mRNA. May play a role in the release non-functional ribosomes and degradation of damaged mRNAs. Has endoribonuclease activity. This chain is Protein pelota homolog, found in Methanococcus vannielii (strain ATCC 35089 / DSM 1224 / JCM 13029 / OCM 148 / SB).